Consider the following 518-residue polypeptide: Glutamate--cysteine ligase (518 aa).

This sequence belongs to the glutamate--cysteine ligase type 1 family. Type 1 subfamily.

It catalyses the reaction L-cysteine + L-glutamate + ATP = gamma-L-glutamyl-L-cysteine + ADP + phosphate + H(+). The protein operates within sulfur metabolism; glutathione biosynthesis; glutathione from L-cysteine and L-glutamate: step 1/2. The polypeptide is Glutamate--cysteine ligase (Shigella boydii serotype 4 (strain Sb227)).